The chain runs to 349 residues: Succinylglutamate desuccinylase (349 aa).

Residues His-70, Glu-73, and His-166 each contribute to the Zn(2+) site. Glu-229 is a catalytic residue.

Belongs to the AspA/AstE family. Succinylglutamate desuccinylase subfamily. Requires Zn(2+) as cofactor.

It carries out the reaction N-succinyl-L-glutamate + H2O = L-glutamate + succinate. It participates in amino-acid degradation; L-arginine degradation via AST pathway; L-glutamate and succinate from L-arginine: step 5/5. Transforms N(2)-succinylglutamate into succinate and glutamate. The chain is Succinylglutamate desuccinylase from Burkholderia pseudomallei (strain 1710b).